We begin with the raw amino-acid sequence, 279 residues long: Thymidylate synthase (279 aa).

133–134 (RR) is a binding site for dUMP. Cys154 functions as the Nucleophile in the catalytic mechanism. Residues 178–181 (RSND), Asn189, and 219–221 (HIY) each bind dUMP. Position 181 (Asp181) interacts with (6R)-5,10-methylene-5,6,7,8-tetrahydrofolate. Ala278 is a (6R)-5,10-methylene-5,6,7,8-tetrahydrofolate binding site.

It belongs to the thymidylate synthase family. Bacterial-type ThyA subfamily. As to quaternary structure, homodimer.

It is found in the cytoplasm. It catalyses the reaction dUMP + (6R)-5,10-methylene-5,6,7,8-tetrahydrofolate = 7,8-dihydrofolate + dTMP. Its pathway is pyrimidine metabolism; dTTP biosynthesis. Its function is as follows. Catalyzes the reductive methylation of 2'-deoxyuridine-5'-monophosphate (dUMP) to 2'-deoxythymidine-5'-monophosphate (dTMP) while utilizing 5,10-methylenetetrahydrofolate (mTHF) as the methyl donor and reductant in the reaction, yielding dihydrofolate (DHF) as a by-product. This enzymatic reaction provides an intracellular de novo source of dTMP, an essential precursor for DNA biosynthesis. In Streptococcus pneumoniae (strain ATCC 700669 / Spain 23F-1), this protein is Thymidylate synthase.